The sequence spans 388 residues: MTVYTSSATAPVNIATLKYWGKRDKSLNLPTNSSISVTLSQNDLRTLTSVAASEDFKEDKLWLNGKLESLESERTKACLADLRTLRKELESNDSSIPKLSQFGVHIVSENNFPTAAGLASSAAGFAALVVSIAKLYELPQNMSEISKIARKGSGSACRSLFGGYVAWEMGQETNGEDSKAVEVAPLSHWPNMKAAILVVSDDKKDTPSTSGMQTTVATSDLFQWRIKEVVPKRFDDMKDSILRKDFATFGDLTMKDSNSFHAVCLDSTPPIFYLNDTSKKIIKLIHELNKREGKIIAAYTFDAGPNAVIYYEQENESKVLGVIYKYFSKVSGWEKLDTKTLDTTSDIQADPELYKGVSKIILTEVGQGPQGSSESLINDKGLPKAVAN.

(R)-5-diphosphomevalonate contacts are provided by residues 19 to 22 (YWGK), Arg-74, 153 to 158 (SGSACR), and Thr-209. Residues 367–388 (QGPQGSSESLINDKGLPKAVAN) are disordered.

It belongs to the diphosphomevalonate decarboxylase family. Homodimer.

The enzyme catalyses (R)-5-diphosphomevalonate + ATP = isopentenyl diphosphate + ADP + phosphate + CO2. It participates in isoprenoid biosynthesis; isopentenyl diphosphate biosynthesis via mevalonate pathway; isopentenyl diphosphate from (R)-mevalonate: step 3/3. Diphosphomevalonate decarboxylase; part of the second module of ergosterol biosynthesis pathway that includes the middle steps of the pathway. The second module is carried out in the vacuole and involves the formation of farnesyl diphosphate, which is also an important intermediate in the biosynthesis of ubiquinone, dolichol, heme and prenylated proteins. Activity by the mevalonate kinase ERG12 first converts mevalonate into 5-phosphomevalonate. 5-phosphomevalonate is then further converted to 5-diphosphomevalonate by the phosphomevalonate kinase ERG8. The diphosphomevalonate decarboxylase MVD1/ERG19 then produces isopentenyl diphosphate. The isopentenyl-diphosphate delta-isomerase IDI1 then catalyzes the 1,3-allylic rearrangement of the homoallylic substrate isopentenyl (IPP) to its highly electrophilic allylic isomer, dimethylallyl diphosphate (DMAPP). Finally the farnesyl diphosphate synthase ERG20 catalyzes the sequential condensation of isopentenyl pyrophosphate with dimethylallyl pyrophosphate, and then with the resultant geranylpyrophosphate to the ultimate product farnesyl pyrophosphate. This is Diphosphomevalonate decarboxylase from Debaryomyces hansenii (strain ATCC 36239 / CBS 767 / BCRC 21394 / JCM 1990 / NBRC 0083 / IGC 2968) (Yeast).